The chain runs to 490 residues: Aspartyl/glutamyl-tRNA(Asn/Gln) amidotransferase subunit B (490 aa).

Belongs to the GatB/GatE family. GatB subfamily. Heterotrimer of A, B and C subunits.

The catalysed reaction is L-glutamyl-tRNA(Gln) + L-glutamine + ATP + H2O = L-glutaminyl-tRNA(Gln) + L-glutamate + ADP + phosphate + H(+). It catalyses the reaction L-aspartyl-tRNA(Asn) + L-glutamine + ATP + H2O = L-asparaginyl-tRNA(Asn) + L-glutamate + ADP + phosphate + 2 H(+). Its function is as follows. Allows the formation of correctly charged Asn-tRNA(Asn) or Gln-tRNA(Gln) through the transamidation of misacylated Asp-tRNA(Asn) or Glu-tRNA(Gln) in organisms which lack either or both of asparaginyl-tRNA or glutaminyl-tRNA synthetases. The reaction takes place in the presence of glutamine and ATP through an activated phospho-Asp-tRNA(Asn) or phospho-Glu-tRNA(Gln). In Burkholderia thailandensis (strain ATCC 700388 / DSM 13276 / CCUG 48851 / CIP 106301 / E264), this protein is Aspartyl/glutamyl-tRNA(Asn/Gln) amidotransferase subunit B.